Here is an 879-residue protein sequence, read N- to C-terminus: Band 4.1-like protein 1 (879 aa).

Residues 1–64 (MTTETGPDSE…RPAEQSLDME (64 aa)) are disordered. Residues 17–35 (ETPQQPEAAAAVTTPVTPA) are compositionally biased toward low complexity. T30 is subject to Phosphothreonine. Basic and acidic residues predominate over residues 38–50 (SHPETNSNEKHLT). At S75 the chain carries Phosphoserine. T79 carries the post-translational modification Phosphothreonine. In terms of domain architecture, FERM spans 97 to 378 (ATCRVTLLDA…EHHTFFRLVS (282 aa)). Y343 carries the post-translational modification Phosphotyrosine. S378, S430, S437, S461, and S466 each carry phosphoserine. Residues 428-501 (SRSLDGAEFS…HKQEFLDKPE (74 aa)) form a disordered region. Positions 444–501 (ENHDAGPDGDKREDDAESGGRRSEAEEGEVRTPTKIKELKPEQETTPRHKQEFLDKPE) are enriched in basic and acidic residues. T475 carries the post-translational modification Phosphothreonine. The segment at 483 to 541 (KPEQETTPRHKQEFLDKPEDVLLKHQASINELKRTLKEPNSKLIHRDRDWERERRLPSS) is spectrin--actin-binding. Phosphoserine is present on S510. Basic and acidic residues predominate over residues 514-538 (LKRTLKEPNSKLIHRDRDWERERRL). Disordered stretches follow at residues 514 to 596 (LKRT…FLKD), 633 to 687 (FEDF…STPE), and 718 to 742 (SRVS…MTTP). Phosphoserine occurs at positions 540, 541, 544, and 546. T550 carries the post-translational modification Phosphothreonine. Basic and acidic residues predominate over residues 550-577 (TPEKASERAGLREGSEEKVKPPRPRAPE). 2 positions are modified to phosphoserine: S564 and S578. At T580 the chain carries Phosphothreonine. Phosphoserine occurs at positions 583, 587, 639, 648, 650, 665, 666, 669, 671, 677, and 684. Residues 635-650 (DFSRSLPELDRDKSDS) show a composition bias toward basic and acidic residues. T685 carries the post-translational modification Phosphothreonine. A compositionally biased stretch (polar residues) spans 718–728 (SRVSTADSTQV). A phosphoserine mark is found at S721, P742, A766, S782, and S868. The tract at residues 744 to 879 (CITTETISTT…EERDKKPQES (136 aa)) is C-terminal (CTD).

In terms of assembly, interacts with AGAP2. In terms of tissue distribution, highest expression in brain, lower in heart and kidney. Within the brain, highest expression in cerebellum.

It is found in the cytoplasm. It localises to the cytoskeleton. Functionally, may function to confer stability and plasticity to neuronal membrane via multiple interactions, including the spectrin-actin-based cytoskeleton, integral membrane channels and membrane-associated guanylate kinases. This Rattus norvegicus (Rat) protein is Band 4.1-like protein 1.